Reading from the N-terminus, the 379-residue chain is Queuine tRNA-ribosyltransferase (379 aa).

Catalysis depends on Asp94, which acts as the Proton acceptor. Residues 94-98 (DSGGF), Asp148, Gln191, and Gly218 contribute to the substrate site. The tract at residues 249 to 255 (GVGSPDS) is RNA binding. Asp268 (nucleophile) is an active-site residue. The segment at 273 to 277 (TRIAR) is RNA binding; important for wobble base 34 recognition. Zn(2+) contacts are provided by Cys306, Cys308, Cys311, and His337.

The protein belongs to the queuine tRNA-ribosyltransferase family. In terms of assembly, homodimer. Within each dimer, one monomer is responsible for RNA recognition and catalysis, while the other monomer binds to the replacement base PreQ1. The cofactor is Zn(2+).

The enzyme catalyses 7-aminomethyl-7-carbaguanine + guanosine(34) in tRNA = 7-aminomethyl-7-carbaguanosine(34) in tRNA + guanine. It functions in the pathway tRNA modification; tRNA-queuosine biosynthesis. Functionally, catalyzes the base-exchange of a guanine (G) residue with the queuine precursor 7-aminomethyl-7-deazaguanine (PreQ1) at position 34 (anticodon wobble position) in tRNAs with GU(N) anticodons (tRNA-Asp, -Asn, -His and -Tyr). Catalysis occurs through a double-displacement mechanism. The nucleophile active site attacks the C1' of nucleotide 34 to detach the guanine base from the RNA, forming a covalent enzyme-RNA intermediate. The proton acceptor active site deprotonates the incoming PreQ1, allowing a nucleophilic attack on the C1' of the ribose to form the product. After dissociation, two additional enzymatic reactions on the tRNA convert PreQ1 to queuine (Q), resulting in the hypermodified nucleoside queuosine (7-(((4,5-cis-dihydroxy-2-cyclopenten-1-yl)amino)methyl)-7-deazaguanosine). The sequence is that of Queuine tRNA-ribosyltransferase from Bacillus cytotoxicus (strain DSM 22905 / CIP 110041 / 391-98 / NVH 391-98).